A 278-amino-acid chain; its full sequence is Ubiquinone biosynthesis protein COQ4, mitochondrial (278 aa).

The N-terminal 28 residues, 1–28 (MATPTSVRIAGFRSLQALCAQRTVTRNF), are a transit peptide targeting the mitochondrion. 4 residues coordinate Zn(2+): His-164, Asp-165, His-168, and Glu-180.

This sequence belongs to the COQ4 family. In terms of assembly, component of a multi-subunit COQ enzyme complex, composed of at least COQ3, COQ4, COQ5, COQ6, COQ7 and COQ9. It depends on Zn(2+) as a cofactor.

The protein localises to the mitochondrion inner membrane. It carries out the reaction a 4-hydroxy-3-methoxy-5-(all-trans-polyprenyl)benzoate + H(+) = a 2-methoxy-6-(all-trans-polyprenyl)phenol + CO2. It functions in the pathway cofactor biosynthesis; ubiquinone biosynthesis. In terms of biological role, lyase that catalyzes the C1-decarboxylation of 4-hydroxy-3-methoxy-5-(all-trans-polyprenyl)benzoic acid into 2-methoxy-6-(all-trans-polyprenyl)phenol during ubiquinone biosynthesis. The sequence is that of Ubiquinone biosynthesis protein COQ4, mitochondrial from Uncinocarpus reesii (strain UAMH 1704).